The following is a 419-amino-acid chain: Subtilisin-like protease 2 (419 aa).

The first 16 residues, 1–16, serve as a signal peptide directing secretion; that stretch reads MQLLNFGLLLLPFVAG. The propeptide occupies 17–122; the sequence is DLAPQPEPLL…VHPDQHVYLA (106 aa). The Inhibitor I9 domain maps to 36–122; sequence QYIVTLKEGL…VHPDQHVYLA (87 aa). The region spanning 131–419 is the Peptidase S8 domain; that stretch reads RWGLGYMSSK…IQERKFKLPK (289 aa). Catalysis depends on charge relay system residues Asp169 and His201. Asn248, Asn261, and Asn348 each carry an N-linked (GlcNAc...) asparagine glycan. The active-site Charge relay system is Ser357. An N-linked (GlcNAc...) asparagine glycan is attached at Asn388.

Belongs to the peptidase S8 family.

The protein localises to the secreted. Its function is as follows. Secreted subtilisin-like serine protease with keratinolytic activity that contributes to pathogenicity. This chain is Subtilisin-like protease 2 (SUB2), found in Arthroderma benhamiae (Trichophyton mentagrophytes).